Here is a 187-residue protein sequence, read N- to C-terminus: ATP synthase subunit b 2 (187 aa).

Residues 1-13 show a composition bias toward polar residues; it reads MAESHATGTTTHT. Residues 1–21 form a disordered region; the sequence is MAESHATGTTTHTEVPHGKPE. The chain crosses the membrane as a helical span at residues 31–53; it reads ASQLVSFAIAFALLYVIVSRFAL.

Belongs to the ATPase B chain family. In terms of assembly, F-type ATPases have 2 components, F(1) - the catalytic core - and F(0) - the membrane proton channel. F(1) has five subunits: alpha(3), beta(3), gamma(1), delta(1), epsilon(1). F(0) has three main subunits: a(1), b(2) and c(10-14). The alpha and beta chains form an alternating ring which encloses part of the gamma chain. F(1) is attached to F(0) by a central stalk formed by the gamma and epsilon chains, while a peripheral stalk is formed by the delta and b chains.

The protein localises to the cell inner membrane. F(1)F(0) ATP synthase produces ATP from ADP in the presence of a proton or sodium gradient. F-type ATPases consist of two structural domains, F(1) containing the extramembraneous catalytic core and F(0) containing the membrane proton channel, linked together by a central stalk and a peripheral stalk. During catalysis, ATP synthesis in the catalytic domain of F(1) is coupled via a rotary mechanism of the central stalk subunits to proton translocation. In terms of biological role, component of the F(0) channel, it forms part of the peripheral stalk, linking F(1) to F(0). The b'-subunit is a diverged and duplicated form of b found in plants and photosynthetic bacteria. This is ATP synthase subunit b 2 (atpF2) from Afipia carboxidovorans (strain ATCC 49405 / DSM 1227 / KCTC 32145 / OM5) (Oligotropha carboxidovorans).